Reading from the N-terminus, the 126-residue chain is MAILGLGTDIVEIGRIEAVIARSGDRLARRVLSDNEWAIWETHQQPVRFLAKRFAVKEAAAKAFGTGIRNGLAFNQFEVFNDELGKPRLRLWGEAQKLAEKLGVVNMHVTLADERRYACATVILES.

Mg(2+) contacts are provided by aspartate 9 and glutamate 58.

Belongs to the P-Pant transferase superfamily. AcpS family. It depends on Mg(2+) as a cofactor.

The protein resides in the cytoplasm. The enzyme catalyses apo-[ACP] + CoA = holo-[ACP] + adenosine 3',5'-bisphosphate + H(+). Transfers the 4'-phosphopantetheine moiety from coenzyme A to a Ser of acyl-carrier-protein. This chain is Holo-[acyl-carrier-protein] synthase, found in Enterobacter sp. (strain 638).